Reading from the N-terminus, the 60-residue chain is Mastoparan-D (60 aa).

Residues 1–27 (MKNTILILFTAFIALLGFFGMSAEALA) form the signal peptide. AXPX repeat units lie at residues 27-30 (ADPI), 31-34 (ADPV), 35-38 (AGPN), and 41-44 (ADPE). Positions 28–45 (DPIADPVAGPNPEADPEA) are excised as a propeptide. Position 59 is a leucine amide (Leu59).

The protein belongs to the MCD family. Mastoparan subfamily. As to expression, expressed by the venom gland.

It localises to the secreted. The protein resides in the target cell membrane. Its function is as follows. Antimicrobial and mast cell degranulating peptide. Has broad spectrum antibacterial activity against both Gram-positive and Gram-negative bacteria (S.aureus MIC=24-32 ug/ml, S.xylosus MIC=2 ug/ml, S.alactolyticus MIC=16 ug/ml, C.koseri MIC=4 ug/ml, E.coli MIC=8 ug/ml, K.pneumoniae MIC=32 ug/ml, P.aerugiosa MIC=128 ug/ml, S.choleraesuis MIC=16 ug/ml, S.typhimurium MIC=32 ug/ml, V.parahamelytics MIC=32 ug/ml). Affects membrane permeability of E.coli. Shows hemolytic activities on sheep, chicken and human erythrocytes. Its mast cell degranulation activity may be related to the activation of G-protein coupled receptors in mast cells as well as interaction with other proteins located in cell endosomal membranes in the mast cells. The sequence is that of Mastoparan-D from Vespa ducalis (Black-tailed hornet).